A 465-amino-acid polypeptide reads, in one-letter code: uncharacterized protein (465 aa).

Residues 1–15 (MEKNYIFENSIYKDE) show a composition bias toward basic and acidic residues. Disordered regions lie at residues 1–31 (MEKN…NNSS) and 288–320 (QLEK…EQLP).

This is an uncharacterized protein from Dictyostelium discoideum (Social amoeba).